We begin with the raw amino-acid sequence, 125 residues long: Immunoglobulin heavy variable 4-39 (125 aa).

Residues 1-26 form the signal peptide; sequence MDLMCKKMKHLWFFLLLVAAPRWVLS. A framework-1 region spans residues 27–51; it reads QLQLQESGPGLVKPSETLSLTCTVS. In terms of domain architecture, Ig-like spans 27–125; sequence QLQLQESGPG…ADTAVYYCAR (99 aa). Cys48 and Cys123 form a disulfide bridge. Residues 52–61 are complementarity-determining-1; the sequence is GGSISSSSYY. Residues 62–78 form a framework-2 region; that stretch reads WGWIRQPPGKGLEWIGS. The complementarity-determining-2 stretch occupies residues 79–85; it reads IYYSGST. Residues 86–123 are framework-3; it reads YYNPSLKSRVTISVDTSKNQFSLKLSSVTAADTAVYYC. Residues 124–125 are complementarity-determining-3; the sequence is AR.

Immunoglobulins are composed of two identical heavy chains and two identical light chains; disulfide-linked.

It localises to the secreted. The protein localises to the cell membrane. Functionally, v region of the variable domain of immunoglobulin heavy chains that participates in the antigen recognition. Immunoglobulins, also known as antibodies, are membrane-bound or secreted glycoproteins produced by B lymphocytes. In the recognition phase of humoral immunity, the membrane-bound immunoglobulins serve as receptors which, upon binding of a specific antigen, trigger the clonal expansion and differentiation of B lymphocytes into immunoglobulins-secreting plasma cells. Secreted immunoglobulins mediate the effector phase of humoral immunity, which results in the elimination of bound antigens. The antigen binding site is formed by the variable domain of one heavy chain, together with that of its associated light chain. Thus, each immunoglobulin has two antigen binding sites with remarkable affinity for a particular antigen. The variable domains are assembled by a process called V-(D)-J rearrangement and can then be subjected to somatic hypermutations which, after exposure to antigen and selection, allow affinity maturation for a particular antigen. The protein is Immunoglobulin heavy variable 4-39 of Homo sapiens (Human).